A 135-amino-acid chain; its full sequence is Protein NrdI (135 aa).

It belongs to the NrdI family.

Probably involved in ribonucleotide reductase function. This Rhizobium johnstonii (strain DSM 114642 / LMG 32736 / 3841) (Rhizobium leguminosarum bv. viciae) protein is Protein NrdI.